The primary structure comprises 353 residues: Photosystem II protein D1 (353 aa).

At Thr2 the chain carries N-acetylthreonine. Residue Thr2 is modified to Phosphothreonine. The next 3 helical transmembrane spans lie at 29 to 46 (YIGW…TATS), 118 to 133 (HFLL…EWEL), and 142 to 156 (WIAV…AATA). Residue His118 participates in chlorophyll a binding. Tyr126 provides a ligand contact to pheophytin a. [CaMn4O5] cluster contacts are provided by Asp170 and Glu189. The chain crosses the membrane as a helical span at residues 197-218 (FHMLGVAGVFGGSLFSAMHGSL). His198 provides a ligand contact to chlorophyll a. A quinone-binding positions include His215 and 264-265 (SF). His215 is a Fe cation binding site. His272 lines the Fe cation pocket. Residues 274–288 (FLAAWPVVGIWFTAL) traverse the membrane as a helical segment. Positions 332, 333, 342, and 344 each coordinate [CaMn4O5] cluster. A propeptide spanning residues 345 to 353 (GVEVPSTNG) is cleaved from the precursor.

The protein belongs to the reaction center PufL/M/PsbA/D family. In terms of assembly, PSII is composed of 1 copy each of membrane proteins PsbA, PsbB, PsbC, PsbD, PsbE, PsbF, PsbH, PsbI, PsbJ, PsbK, PsbL, PsbM, PsbT, PsbX, PsbY, PsbZ, Psb30/Ycf12, at least 3 peripheral proteins of the oxygen-evolving complex and a large number of cofactors. It forms dimeric complexes. Requires The D1/D2 heterodimer binds P680, chlorophylls that are the primary electron donor of PSII, and subsequent electron acceptors. It shares a non-heme iron and each subunit binds pheophytin, quinone, additional chlorophylls, carotenoids and lipids. D1 provides most of the ligands for the Mn4-Ca-O5 cluster of the oxygen-evolving complex (OEC). There is also a Cl(-1) ion associated with D1 and D2, which is required for oxygen evolution. The PSII complex binds additional chlorophylls, carotenoids and specific lipids. as cofactor. Post-translationally, tyr-161 forms a radical intermediate that is referred to as redox-active TyrZ, YZ or Y-Z. C-terminally processed by CTPA; processing is essential to allow assembly of the oxygen-evolving complex and thus photosynthetic growth.

The protein localises to the plastid. Its subcellular location is the chloroplast thylakoid membrane. It carries out the reaction 2 a plastoquinone + 4 hnu + 2 H2O = 2 a plastoquinol + O2. In terms of biological role, photosystem II (PSII) is a light-driven water:plastoquinone oxidoreductase that uses light energy to abstract electrons from H(2)O, generating O(2) and a proton gradient subsequently used for ATP formation. It consists of a core antenna complex that captures photons, and an electron transfer chain that converts photonic excitation into a charge separation. The D1/D2 (PsbA/PsbD) reaction center heterodimer binds P680, the primary electron donor of PSII as well as several subsequent electron acceptors. This Morus indica (Mulberry) protein is Photosystem II protein D1.